A 276-amino-acid chain; its full sequence is Small ribosomal subunit protein uS3 (276 aa).

The region spanning 43–111 is the KH type-2 domain; it reads IRQLMSTGME…QVQLNILEVK (69 aa). Low complexity predominate over residues 218–227; sequence AQAASAPSRG. The disordered stretch occupies residues 218–276; that stretch reads AQAASAPSRGPRSDRGGRPGGADRGDRRRRNDRPAADAAPAAEAPAVEAAPAAAEGGQA. Residues 228–243 are compositionally biased toward basic and acidic residues; it reads PRSDRGGRPGGADRGD. A compositionally biased stretch (low complexity) spans 253-276; it reads ADAAPAAEAPAVEAAPAAAEGGQA.

It belongs to the universal ribosomal protein uS3 family. Part of the 30S ribosomal subunit. Forms a tight complex with proteins S10 and S14.

Functionally, binds the lower part of the 30S subunit head. Binds mRNA in the 70S ribosome, positioning it for translation. The polypeptide is Small ribosomal subunit protein uS3 (Pseudarthrobacter chlorophenolicus (strain ATCC 700700 / DSM 12829 / CIP 107037 / JCM 12360 / KCTC 9906 / NCIMB 13794 / A6) (Arthrobacter chlorophenolicus)).